The following is a 224-amino-acid chain: Na(+)-translocating NADH-quinone reductase subunit D (224 aa).

Helical transmembrane passes span 43–63, 67–87, 104–124, 132–152, and 179–199; these read TVMA…ISMI, IPSS…VIVV, VFVG…AFAM, FFDG…LGFV, and NGLL…IWAL.

The protein belongs to the NqrDE/RnfAE family. In terms of assembly, composed of six subunits; NqrA, NqrB, NqrC, NqrD, NqrE and NqrF.

It is found in the cell inner membrane. The enzyme catalyses a ubiquinone + n Na(+)(in) + NADH + H(+) = a ubiquinol + n Na(+)(out) + NAD(+). Its function is as follows. NQR complex catalyzes the reduction of ubiquinone-1 to ubiquinol by two successive reactions, coupled with the transport of Na(+) ions from the cytoplasm to the periplasm. NqrA to NqrE are probably involved in the second step, the conversion of ubisemiquinone to ubiquinol. The chain is Na(+)-translocating NADH-quinone reductase subunit D from Pseudomonas aeruginosa (strain LESB58).